The following is a 99-amino-acid chain: Aspartyl/glutamyl-tRNA(Asn/Gln) amidotransferase subunit C (99 aa).

It belongs to the GatC family. In terms of assembly, heterotrimer of A, B and C subunits.

It catalyses the reaction L-glutamyl-tRNA(Gln) + L-glutamine + ATP + H2O = L-glutaminyl-tRNA(Gln) + L-glutamate + ADP + phosphate + H(+). The enzyme catalyses L-aspartyl-tRNA(Asn) + L-glutamine + ATP + H2O = L-asparaginyl-tRNA(Asn) + L-glutamate + ADP + phosphate + 2 H(+). Allows the formation of correctly charged Asn-tRNA(Asn) or Gln-tRNA(Gln) through the transamidation of misacylated Asp-tRNA(Asn) or Glu-tRNA(Gln) in organisms which lack either or both of asparaginyl-tRNA or glutaminyl-tRNA synthetases. The reaction takes place in the presence of glutamine and ATP through an activated phospho-Asp-tRNA(Asn) or phospho-Glu-tRNA(Gln). The protein is Aspartyl/glutamyl-tRNA(Asn/Gln) amidotransferase subunit C of Corynebacterium efficiens (strain DSM 44549 / YS-314 / AJ 12310 / JCM 11189 / NBRC 100395).